The primary structure comprises 562 residues: MAVFRSGLLVLTTPLASLVPRLAPILTSAARLVNHTLYVHLQPGMNLGGPAQPQSSPVQATFEVIDFITHLYAGADLHRHLDVRILLTNIRTKSFLPPLPSSVQNLAHPPEVVLTDFQTLDGSQYNPVKQQLERYATSCYSCCPQLSSVLLYPDYGPGMLPVQPLDVPLPSTIRPASPVARSAKQPVRGHQRGAVGGTFDRLHNAHKVLLSVACILAQEQLVVGVADKDLLKSKLLPELLQPYTERVEHLSEFLVDIKPSLSFDLIPLLDPYGPAGSDPSLEFLVVSEETYRGGMAVNRFRLENGLEELTLYQIQLLKDLNPKENEEDKVSSSSFRQQMLGNLLRPPHKRPELPPGCYVIGLTGISGSGKSSVAQRLKGLGAYVIDSDQLGHRSYAPGGPAYQPVVEAFGTDILHKDGTINRKVLGSRVFGNKKQLKILTDIVWPVIAKLAREEVDQAVAEGKRVCVIDAAVLLEAGWQNMVHEVWTVVIPETEAVRRIVERDGLSEAAAQSRLQSQMSGQQLVDQSHVVLSTLWEPHVTQRQVEKAWALLQKRISEAPSDP.

A phosphoserine mark is found at Ser177 and Ser182. The tract at residues 179-357 (VARSAKQPVR…HKRPELPPGC (179 aa)) is phosphopantetheine adenylyltransferase. Residues 359-562 (VIGLTGISGS…KRISEAPSDP (204 aa)) form the DPCK domain. Residue 364-371 (GISGSGKS) coordinates ATP.

In the central section; belongs to the eukaryotic CoaD family. Monomer. The N-terminus is blocked.

Its subcellular location is the cytoplasm. It localises to the mitochondrion matrix. It carries out the reaction (R)-4'-phosphopantetheine + ATP + H(+) = 3'-dephospho-CoA + diphosphate. The catalysed reaction is 3'-dephospho-CoA + ATP = ADP + CoA + H(+). Its pathway is cofactor biosynthesis; coenzyme A biosynthesis; CoA from (R)-pantothenate: step 4/5. It participates in cofactor biosynthesis; coenzyme A biosynthesis; CoA from (R)-pantothenate: step 5/5. Its function is as follows. Bifunctional enzyme that catalyzes the fourth and fifth sequential steps of CoA biosynthetic pathway. The fourth reaction is catalyzed by the phosphopantetheine adenylyltransferase, coded by the coaD domain; the fifth reaction is catalyzed by the dephospho-CoA kinase, coded by the coaE domain. May act as a point of CoA biosynthesis regulation. The protein is Bifunctional coenzyme A synthase of Sus scrofa (Pig).